The sequence spans 153 residues: Large ribosomal subunit protein uL15 (153 aa).

The segment at 1-42 (MKLNTIKPGIGSAKPKRRVGRGIGSGLGKTCGRGHKGQKSRA) is disordered. Positions 21–31 (RGIGSGLGKTC) are enriched in gly residues.

It belongs to the universal ribosomal protein uL15 family. Part of the 50S ribosomal subunit.

In terms of biological role, binds to the 23S rRNA. The sequence is that of Large ribosomal subunit protein uL15 from Nitrosomonas europaea (strain ATCC 19718 / CIP 103999 / KCTC 2705 / NBRC 14298).